A 122-amino-acid chain; its full sequence is Large ribosomal subunit protein uL14 (122 aa).

This sequence belongs to the universal ribosomal protein uL14 family. As to quaternary structure, part of the 50S ribosomal subunit. Forms a cluster with proteins L3 and L19. In the 70S ribosome, L14 and L19 interact and together make contacts with the 16S rRNA in bridges B5 and B8.

Functionally, binds to 23S rRNA. Forms part of two intersubunit bridges in the 70S ribosome. The sequence is that of Large ribosomal subunit protein uL14 from Bacillus anthracis (strain A0248).